The primary structure comprises 350 residues: Ketol-acid reductoisomerase (NADP(+)) 2 (350 aa).

Positions 3-183 (ATIWYEKDAD…GALRAGAIKT (181 aa)) constitute a KARI N-terminal Rossmann domain. Residues 26-29 (YGSQ), R49, S52, S54, and 84-87 (DQYQ) each bind NADP(+). Residue H109 is part of the active site. NADP(+) is bound at residue G135. Residues 184-327 (TFTEETETDL…PKLRAMFSWN (144 aa)) form the KARI C-terminal knotted domain. Positions 192, 196, 228, and 232 each coordinate Mg(2+). S253 serves as a coordination point for substrate. The interval 331 to 350 (AKDKDETESFNGKIARTQVQ) is disordered.

This sequence belongs to the ketol-acid reductoisomerase family. The cofactor is Mg(2+).

The catalysed reaction is (2R)-2,3-dihydroxy-3-methylbutanoate + NADP(+) = (2S)-2-acetolactate + NADPH + H(+). It catalyses the reaction (2R,3R)-2,3-dihydroxy-3-methylpentanoate + NADP(+) = (S)-2-ethyl-2-hydroxy-3-oxobutanoate + NADPH + H(+). The protein operates within amino-acid biosynthesis; L-isoleucine biosynthesis; L-isoleucine from 2-oxobutanoate: step 2/4. Its pathway is amino-acid biosynthesis; L-valine biosynthesis; L-valine from pyruvate: step 2/4. Functionally, involved in the biosynthesis of branched-chain amino acids (BCAA). Catalyzes an alkyl-migration followed by a ketol-acid reduction of (S)-2-acetolactate (S2AL) to yield (R)-2,3-dihydroxy-isovalerate. In the isomerase reaction, S2AL is rearranged via a Mg-dependent methyl migration to produce 3-hydroxy-3-methyl-2-ketobutyrate (HMKB). In the reductase reaction, this 2-ketoacid undergoes a metal-dependent reduction by NADPH to yield (R)-2,3-dihydroxy-isovalerate. In Bifidobacterium longum (strain NCC 2705), this protein is Ketol-acid reductoisomerase (NADP(+)) 2.